Here is a 319-residue protein sequence, read N- to C-terminus: MKILLANPRGFCAGVYRAISIVESALKIYGPPIYVRHEVVHNRYVVEDLRKRGAIFIEHISQVPDGSVLIFSAHGVSQAVKAQAKARQLKILFDATCPLVTKVHMEVLRASRKGQEAILIGHAGHPEVEGTMGQYDNASAGVYLVESVEDVNQLKVKDENNLCFMTQTTLSVDDTLEITSALQKRFPKIIGPRKDDICYATTNRQQAVRELSEKSDMVLVVGSKNSSNSNRLAELAKRMGKPAYLIDSDADIHADWLKNIKYIGVTAGASAPDVLVQKVIITLQSLGADESIEMMGQEENIVFEIPKQLRIHATEISCS.

A [4Fe-4S] cluster-binding site is contributed by Cys-12. (2E)-4-hydroxy-3-methylbut-2-enyl diphosphate-binding residues include His-41 and His-74. Dimethylallyl diphosphate-binding residues include His-41 and His-74. Isopentenyl diphosphate-binding residues include His-41 and His-74. Cys-97 is a binding site for [4Fe-4S] cluster. Residue His-125 participates in (2E)-4-hydroxy-3-methylbut-2-enyl diphosphate binding. His-125 provides a ligand contact to dimethylallyl diphosphate. Position 125 (His-125) interacts with isopentenyl diphosphate. Catalysis depends on Glu-127, which acts as the Proton donor. Thr-168 is a binding site for (2E)-4-hydroxy-3-methylbut-2-enyl diphosphate. Cys-198 contacts [4Fe-4S] cluster. (2E)-4-hydroxy-3-methylbut-2-enyl diphosphate is bound by residues Ser-226, Ser-227, Asn-228, and Ser-270. Positions 226, 227, 228, and 270 each coordinate dimethylallyl diphosphate. 4 residues coordinate isopentenyl diphosphate: Ser-226, Ser-227, Asn-228, and Ser-270.

This sequence belongs to the IspH family. In terms of assembly, homodimer. [4Fe-4S] cluster is required as a cofactor.

It carries out the reaction isopentenyl diphosphate + 2 oxidized [2Fe-2S]-[ferredoxin] + H2O = (2E)-4-hydroxy-3-methylbut-2-enyl diphosphate + 2 reduced [2Fe-2S]-[ferredoxin] + 2 H(+). The enzyme catalyses dimethylallyl diphosphate + 2 oxidized [2Fe-2S]-[ferredoxin] + H2O = (2E)-4-hydroxy-3-methylbut-2-enyl diphosphate + 2 reduced [2Fe-2S]-[ferredoxin] + 2 H(+). It functions in the pathway isoprenoid biosynthesis; dimethylallyl diphosphate biosynthesis; dimethylallyl diphosphate from (2E)-4-hydroxy-3-methylbutenyl diphosphate: step 1/1. The protein operates within isoprenoid biosynthesis; isopentenyl diphosphate biosynthesis via DXP pathway; isopentenyl diphosphate from 1-deoxy-D-xylulose 5-phosphate: step 6/6. Its function is as follows. Catalyzes the conversion of 1-hydroxy-2-methyl-2-(E)-butenyl 4-diphosphate (HMBPP) into a mixture of isopentenyl diphosphate (IPP) and dimethylallyl diphosphate (DMAPP). Acts in the terminal step of the DOXP/MEP pathway for isoprenoid precursor biosynthesis. This Hamiltonella defensa subsp. Acyrthosiphon pisum (strain 5AT) protein is 4-hydroxy-3-methylbut-2-enyl diphosphate reductase.